A 230-amino-acid polypeptide reads, in one-letter code: Isoprenyl transferase (230 aa).

Residue aspartate 14 is part of the active site. Aspartate 14 is a binding site for Mg(2+). Residues 15-18 (GNGR), tryptophan 19, arginine 27, histidine 31, and 59-61 (STE) contribute to the substrate site. Asparagine 62 acts as the Proton acceptor in catalysis. Substrate contacts are provided by residues tryptophan 63, arginine 65, arginine 175, and 181–183 (RIS). Glutamate 194 contacts Mg(2+).

This sequence belongs to the UPP synthase family. Homodimer. Mg(2+) is required as a cofactor.

Functionally, catalyzes the condensation of isopentenyl diphosphate (IPP) with allylic pyrophosphates generating different type of terpenoids. This Fusobacterium nucleatum subsp. nucleatum (strain ATCC 25586 / DSM 15643 / BCRC 10681 / CIP 101130 / JCM 8532 / KCTC 2640 / LMG 13131 / VPI 4355) protein is Isoprenyl transferase.